The chain runs to 488 residues: Ribulose bisphosphate carboxylase large chain 1 (488 aa).

Substrate is bound by residues Asn-128 and Thr-178. The Proton acceptor role is filled by Lys-180. Lys-182 serves as a coordination point for substrate. Residues Lys-206, Asp-208, and Glu-209 each contribute to the Mg(2+) site. Position 206 is an N6-carboxylysine (Lys-206). The active-site Proton acceptor is His-298. Arg-299, His-331, and Ser-383 together coordinate substrate.

This sequence belongs to the RuBisCO large chain family. Type I subfamily. As to quaternary structure, heterohexadecamer of 8 large chains and 8 small chains. Mg(2+) serves as cofactor.

The catalysed reaction is 2 (2R)-3-phosphoglycerate + 2 H(+) = D-ribulose 1,5-bisphosphate + CO2 + H2O. It carries out the reaction D-ribulose 1,5-bisphosphate + O2 = 2-phosphoglycolate + (2R)-3-phosphoglycerate + 2 H(+). In terms of biological role, ruBisCO catalyzes two reactions: the carboxylation of D-ribulose 1,5-bisphosphate, the primary event in carbon dioxide fixation, as well as the oxidative fragmentation of the pentose substrate. Both reactions occur simultaneously and in competition at the same active site. In Methylibium petroleiphilum (strain ATCC BAA-1232 / LMG 22953 / PM1), this protein is Ribulose bisphosphate carboxylase large chain 1.